The following is a 196-amino-acid chain: ATP-dependent Clp protease proteolytic subunit (196 aa).

Residue serine 99 is the Nucleophile of the active site. Residue histidine 124 is part of the active site.

Belongs to the peptidase S14 family. As to quaternary structure, fourteen ClpP subunits assemble into 2 heptameric rings which stack back to back to give a disk-like structure with a central cavity, resembling the structure of eukaryotic proteasomes.

It localises to the cytoplasm. The catalysed reaction is Hydrolysis of proteins to small peptides in the presence of ATP and magnesium. alpha-casein is the usual test substrate. In the absence of ATP, only oligopeptides shorter than five residues are hydrolyzed (such as succinyl-Leu-Tyr-|-NHMec, and Leu-Tyr-Leu-|-Tyr-Trp, in which cleavage of the -Tyr-|-Leu- and -Tyr-|-Trp bonds also occurs).. Its function is as follows. Cleaves peptides in various proteins in a process that requires ATP hydrolysis. Has a chymotrypsin-like activity. Plays a major role in the degradation of misfolded proteins. The polypeptide is ATP-dependent Clp protease proteolytic subunit (Campylobacter lari (strain RM2100 / D67 / ATCC BAA-1060)).